A 154-amino-acid polypeptide reads, in one-letter code: OCIA domain-containing protein 2 (154 aa).

The interval 1–23 (MASVSTHENQEKGPHLPPPSKQS) is disordered. The OCIA domain maps to 1-120 (MASVSTHENQ…HSFEGQLRGA (120 aa)). The residue at position 41 (Lys-41) is an N6-acetyllysine.

As to quaternary structure, interacts (via OCIA domain) with OCIAD1/ASRIJ and STAT3.

The protein localises to the endosome. The protein resides in the mitochondrion. It is found in the mitochondrion inner membrane. Its function is as follows. Has an essential role in the assembly of mitochondrial respiratory chain complex III. Is also required for STAT3 activation and plays a role in cell migration. The protein is OCIA domain-containing protein 2 (OCIAD2) of Bos taurus (Bovine).